Reading from the N-terminus, the 168-residue chain is Protein-export protein SecB (168 aa).

It belongs to the SecB family. As to quaternary structure, homotetramer, a dimer of dimers. One homotetramer interacts with 1 SecA dimer.

Its subcellular location is the cytoplasm. Its function is as follows. One of the proteins required for the normal export of preproteins out of the cell cytoplasm. It is a molecular chaperone that binds to a subset of precursor proteins, maintaining them in a translocation-competent state. It also specifically binds to its receptor SecA. The sequence is that of Protein-export protein SecB from Glaesserella parasuis serovar 5 (strain SH0165) (Haemophilus parasuis).